Consider the following 262-residue polypeptide: Dehydrin COR410 (262 aa).

Disordered regions lie at residues 1–153 (MEDE…HDTD) and 187–262 (LPGG…KPSA). Basic and acidic residues-rich tracts occupy residues 34-45 (KKAEEDKEKEEE) and 53-74 (VSVE…KETL). The segment covering 89–101 (SDEEEEEVIDDNG) has biased composition (acidic residues). A run of 2 repeats spans residues 106-126 (RKKK…HKDT) and 173-193 (EEEK…GHKK). The segment at 106 to 245 (RKKKKGLKEK…MDKLPGYHKT (140 aa)) is 3 X 21 AA repeats, Lys-rich. Composition is skewed to basic and acidic residues over residues 113–130 (KEKL…EGEH) and 187–196 (LPGGHKKPED). Low complexity predominate over residues 197–209 (AAAVPVTHAAPAP). Repeat 3 spans residues 225–245 (AKEKKGLLGKIMDKLPGYHKT). The segment covering 244-262 (KTGEEDKAAAATGEHKPSA) has biased composition (basic and acidic residues).

In terms of tissue distribution, expressed in roots, crown and leaves during cold acclimation.

The polypeptide is Dehydrin COR410 (COR410) (Triticum aestivum (Wheat)).